A 1141-amino-acid chain; its full sequence is Myosin-binding protein C, slow-type (1141 aa).

Over residues 1 to 10 the composition is skewed to basic and acidic residues; the sequence is MPEPTKKEEN. The disordered stretch occupies residues 1–51; sequence MPEPTKKEENEVPAPAPPPEEPSKEKEAGTTPAKDWTLVETPPGEEQAKQN. 5 Ig-like C2-type domains span residues 72 to 144, 251 to 340, 341 to 431, 432 to 520, and 522 to 619; these read GEDI…RCEV, SAAF…VREP, PIMV…VDLK, PLKI…HVID, and PKII…VVDF. The residue at position 406 (Thr406) is a Phosphothreonine. Position 611 is a phosphoserine (Ser611). Fibronectin type-III domains lie at 622-721 and 722-833; these read PPVA…TSPP and TLLT…VKEI. Thr798 is subject to Phosphothreonine. Residue Tyr823 is modified to Phosphotyrosine. Residues 837 to 931 enclose the Ig-like C2-type 6 domain; the sequence is PKIRIPRHLK…ASIDIQIIDR (95 aa). The Fibronectin type-III 3 domain maps to 934 to 1029; that stretch reads PPQIVKIEDV…TKESAVIARD (96 aa). Residues 1047-1141 enclose the Ig-like C2-type 7 domain; that stretch reads PMFTQPLVNT…CKLEVKVIAQ (95 aa).

This sequence belongs to the immunoglobulin superfamily. MyBP family. In terms of assembly, interacts with USP25 (isoform USP25m only); the interaction prevents proteasomal degradation of MYBPC1.

Its function is as follows. Thick filament-associated protein located in the crossbridge region of vertebrate striated muscle a bands. Slow skeletal protein that binds to both myosin and actin. In vitro, binds to native thin filaments and modifies the activity of actin-activated myosin ATPase. May modulate muscle contraction or may play a more structural role. The polypeptide is Myosin-binding protein C, slow-type (MYBPC1) (Homo sapiens (Human)).